Consider the following 325-residue polypeptide: Heat-inducible transcription repressor HrcA (325 aa).

Belongs to the HrcA family.

In terms of biological role, negative regulator of class I heat shock genes (grpE-dnaK-dnaJ and groELS operons). Prevents heat-shock induction of these operons. This is Heat-inducible transcription repressor HrcA from Staphylococcus aureus (strain JH1).